Reading from the N-terminus, the 412-residue chain is Phosphoglycerate kinase (412 aa).

(2R)-3-phosphoglycerate contacts are provided by Val-20, Asp-21, Phe-22, Asn-23, Gln-35, Arg-36, Ser-59, His-60, Gly-62, Arg-63, Leu-118, Arg-119, His-166, and Arg-167. Gly-210 contacts ADP. Gly-210 is a CDP binding site. Ala-211 and Lys-212 together coordinate AMP. Ala-211 provides a ligand contact to ATP. Ala-211 lines the Mg(2+) pocket. Mg(2+) contacts are provided by Ala-214 and Asp-215. Residue Asp-215 participates in CDP binding. AMP is bound at residue Lys-216. Lys-216 lines the ATP pocket. Gly-234 serves as a coordination point for ADP. Gly-234 lines the CDP pocket. AMP-binding residues include Gly-235 and Gly-308. 2 residues coordinate ATP: Gly-235 and Gly-308. The CDP site is built by Gly-333 and Phe-338. Phe-338 is a binding site for ADP. AMP is bound at residue Glu-339. 3 residues coordinate ATP: Glu-339, Asp-370, and Thr-371. Asp-370 is a Mg(2+) binding site.

It belongs to the phosphoglycerate kinase family. Monomer. It depends on Mg(2+) as a cofactor.

It is found in the cytoplasm. It catalyses the reaction (2R)-3-phosphoglycerate + ATP = (2R)-3-phospho-glyceroyl phosphate + ADP. The protein operates within carbohydrate degradation; glycolysis; pyruvate from D-glyceraldehyde 3-phosphate: step 2/5. Functionally, catalyzes one of the two ATP producing reactions in the glycolytic pathway via the reversible conversion of 1,3-diphosphoglycerate to 3-phosphoglycerate. In addition to its role as a glycolytic enzyme, it seems that PGK-1 acts as a polymerase alpha cofactor protein (primer recognition protein). May play a role in sperm motility. This is Phosphoglycerate kinase (PGK) from Aplysia californica (California sea hare).